Reading from the N-terminus, the 1047-residue chain is Jouberin (1047 aa).

Basic and acidic residues-rich tracts occupy residues 1-17 (MEPETPEKVDSAQEKVR), 29-40 (SREKTGIEEKGE), and 77-86 (LLHDDKLASE). Disordered regions lie at residues 1–40 (MEPETPEKVDSAQEKVRGKTPTADDSDDSREKTGIEEKGE) and 67–181 (EQLT…SRDS). Positions 1–284 (MEPETPEKVD…IFNENFPYLL (284 aa)) are interaction with HAP1. The span at 96-106 (PVPTKPESSPS) shows a compositional bias: low complexity. Residues 115–138 (GEQKKEGTPEDSQHMEGICSREQD) are compositionally biased toward basic and acidic residues. Residues 149-159 (PKPKKTKKKTK) show a composition bias toward basic residues. Residues 172 to 181 (GVHEITSRDS) show a composition bias toward basic and acidic residues. WD repeat units follow at residues 457-499 (AGER…FMRE), 502-541 (GHLNIIYDLDWSKDDRYLVTSSSDGTARVWKNEINSTSTF), 545-585 (PHPS…DAAI), 592-631 (VHKSFVNSICFDDEGHHMYSGDCIGVIVVWDTYVKVNDVQ), 648-687 (FRGVPISYLEVHPNGKRLLIHTKDSTLRIMDLRILAARKF), 691-730 (ANYREKIHSTLTPCGTLLFSGSEDGIVYVWNPETGEQVAM), and 735-776 (PFKS…AQQE). Phosphoserine is present on Ser853. An SH3 domain is found at 902–962 (DPPPMVVALY…PANHVASETL (61 aa)). 2 stretches are compositionally biased toward basic and acidic residues: residues 963–987 (YRDSPPKVKERSPPLTPKEKTKPEK) and 1013–1040 (HSEKGKDQNVEDRGHKVDMETKKSEPVV). The disordered stretch occupies residues 963-1047 (YRDSPPKVKE…PVVRKVTLIE (85 aa)). A Phosphoserine modification is found at Ser974.

As to quaternary structure, self-associates. Part of the tectonic-like complex (also named B9 complex). Interacts with MKS1. Interacts with NPHP1; probably as heterodimers and/or AHI1(2):NPHP1(2) heterotetramers. Interacts (via SH3 domain) with the dynamin GTPase DNM2. Interacts with HAP1; probably as AHI1(2):HAP1(2) heterotetramers. Interacts with RAB8A. Interacts with CEND1. Interacts with SPATA7. As to expression, expressed in the retina (at protein level). Highly expressed in the brain. Highly expressed in the testis. Expressed in the kidney, thymus, heart, lung, spleen. Weakly expressed in the liver, stomach, pancreas, and embryo. Strongly expressed during periods of both cortical and cerebellar development.

It is found in the cytoplasm. The protein resides in the cytoskeleton. The protein localises to the cilium basal body. It localises to the microtubule organizing center. Its subcellular location is the centrosome. It is found in the centriole. The protein resides in the cell junction. The protein localises to the adherens junction. In terms of biological role, involved in vesicle trafficking and required for ciliogenesis, formation of primary non-motile cilium, and recruitment of RAB8A to the basal body of primary cilium. Component of the tectonic-like complex, a complex localized at the transition zone of primary cilia and acting as a barrier that prevents diffusion of transmembrane proteins between the cilia and plasma membranes. Involved in neuronal differentiation. As a positive modulator of classical Wnt signaling, may play a crucial role in ciliary signaling during cerebellum embryonic development. The polypeptide is Jouberin (Ahi1) (Mus musculus (Mouse)).